The following is a 289-amino-acid chain: ATP synthase subunit a (289 aa).

Transmembrane regions (helical) follow at residues 43–63 (AFHLDTLGWSVALGLIFLFIF), 103–123 (VIAPLALTIFVWVFLMNAVDL), 160–180 (FCVFALIIFYSIKVKGLGGFI), 193–213 (IFVQILLIPVNFLLEFVTLIA), 232–252 (VFILIAVMFGSGLLWLSGLGV), and 259–279 (AVFHILIITLQAFIFMMLTIV).

This sequence belongs to the ATPase A chain family. As to quaternary structure, F-type ATPases have 2 components, CF(1) - the catalytic core - and CF(0) - the membrane proton channel. CF(1) has five subunits: alpha(3), beta(3), gamma(1), delta(1), epsilon(1). CF(0) has three main subunits: a(1), b(2) and c(9-12). The alpha and beta chains form an alternating ring which encloses part of the gamma chain. CF(1) is attached to CF(0) by a central stalk formed by the gamma and epsilon chains, while a peripheral stalk is formed by the delta and b chains.

It localises to the cell inner membrane. Key component of the proton channel; it plays a direct role in the translocation of protons across the membrane. The chain is ATP synthase subunit a from Pseudomonas putida (strain GB-1).